The sequence spans 573 residues: Dihydroxy-acid dehydratase (573 aa).

C62 provides a ligand contact to [2Fe-2S] cluster. Residue D94 coordinates Mg(2+). C135 provides a ligand contact to [2Fe-2S] cluster. The Mg(2+) site is built by D136 and K137. Position 137 is an N6-carboxylysine (K137). Position 212 (C212) interacts with [2Fe-2S] cluster. A Mg(2+)-binding site is contributed by E463. Catalysis depends on S489, which acts as the Proton acceptor.

Belongs to the IlvD/Edd family. As to quaternary structure, homodimer. Requires [2Fe-2S] cluster as cofactor. Mg(2+) serves as cofactor.

It catalyses the reaction (2R)-2,3-dihydroxy-3-methylbutanoate = 3-methyl-2-oxobutanoate + H2O. The enzyme catalyses (2R,3R)-2,3-dihydroxy-3-methylpentanoate = (S)-3-methyl-2-oxopentanoate + H2O. It participates in amino-acid biosynthesis; L-isoleucine biosynthesis; L-isoleucine from 2-oxobutanoate: step 3/4. It functions in the pathway amino-acid biosynthesis; L-valine biosynthesis; L-valine from pyruvate: step 3/4. Its function is as follows. Functions in the biosynthesis of branched-chain amino acids. Catalyzes the dehydration of (2R,3R)-2,3-dihydroxy-3-methylpentanoate (2,3-dihydroxy-3-methylvalerate) into 2-oxo-3-methylpentanoate (2-oxo-3-methylvalerate) and of (2R)-2,3-dihydroxy-3-methylbutanoate (2,3-dihydroxyisovalerate) into 2-oxo-3-methylbutanoate (2-oxoisovalerate), the penultimate precursor to L-isoleucine and L-valine, respectively. The chain is Dihydroxy-acid dehydratase from Renibacterium salmoninarum (strain ATCC 33209 / DSM 20767 / JCM 11484 / NBRC 15589 / NCIMB 2235).